Reading from the N-terminus, the 300-residue chain is Protoheme IX farnesyltransferase (300 aa).

The next 9 membrane-spanning stretches (helical) occupy residues 21 to 43 (PRVVELLLLTTVPTMILAQRGVP), 45 to 65 (PLSVLSVLLGGAMSAGAAGAF), 94 to 114 (ASLIFAWMLCVISVLWFLLFV), 117 to 137 (LSALLSAIAVFLYAFFYSIVL), 145 to 167 (IVWGGLAGCMPVLIAWAAVTGSI), 171 to 193 (AIVLFAVVFLWTPPHYWPLSIHY), 213 to 233 (LVVLQVLLYAFAVVACTLLLI), 235 to 255 (VAHMTPLYGLFSAVLGAWFVY), and 272 to 292 (AMHIFSLSNTYLSLVFLSVGI).

This sequence belongs to the UbiA prenyltransferase family. Protoheme IX farnesyltransferase subfamily.

The protein localises to the cell membrane. The enzyme catalyses heme b + (2E,6E)-farnesyl diphosphate + H2O = Fe(II)-heme o + diphosphate. It participates in porphyrin-containing compound metabolism; heme O biosynthesis; heme O from protoheme: step 1/1. Converts heme B (protoheme IX) to heme O by substitution of the vinyl group on carbon 2 of heme B porphyrin ring with a hydroxyethyl farnesyl side group. This Tropheryma whipplei (strain TW08/27) (Whipple's bacillus) protein is Protoheme IX farnesyltransferase.